We begin with the raw amino-acid sequence, 483 residues long: Alpha-tubulin N-acetyltransferase (483 aa).

The N-acetyltransferase domain occupies 1 to 186; the sequence is MEFRFNMHPL…NNFVVYEGFF (186 aa). Acetyl-CoA-binding positions include 120-133 and 156-165; these read FYVHESRQRGGLGR and SEKLLGFLQK. 3 disordered regions span residues 204–231, 330–395, and 437–472; these read TASPNTNLFGPTFTTTEERRRSTSQTRT, ETLP…VLGS, and SVKINRPIGKSGTRGSLHDDNESVHSNGSQQGGGGH. The segment covering 347–369 has biased composition (basic and acidic residues); it reads YDFHPHHLELHDDTEGGGSHRDQ. The segment covering 370–383 has biased composition (low complexity); that stretch reads SLSPQSVSQQASPV.

The protein belongs to the acetyltransferase ATAT1 family.

The enzyme catalyses L-lysyl-[alpha-tubulin] + acetyl-CoA = N(6)-acetyl-L-lysyl-[alpha-tubulin] + CoA + H(+). In terms of biological role, specifically acetylates 'Lys-40' in alpha-tubulin on the lumenal side of microtubules. Promotes microtubule destabilization and accelerates microtubule dynamics; this activity may be independent of acetylation activity. Acetylates alpha-tubulin with a slow enzymatic rate, due to a catalytic site that is not optimized for acetyl transfer. Enters the microtubule through each end and diffuses quickly throughout the lumen of microtubules. Acetylates only long/old microtubules because of its slow acetylation rate since it does not have time to act on dynamically unstable microtubules before the enzyme is released. The chain is Alpha-tubulin N-acetyltransferase from Anopheles gambiae (African malaria mosquito).